The primary structure comprises 88 residues: Small ribosomal subunit protein uS15 (88 aa).

The protein belongs to the universal ribosomal protein uS15 family. In terms of assembly, part of the 30S ribosomal subunit. Forms a bridge to the 50S subunit in the 70S ribosome, contacting the 23S rRNA.

Its function is as follows. One of the primary rRNA binding proteins, it binds directly to 16S rRNA where it helps nucleate assembly of the platform of the 30S subunit by binding and bridging several RNA helices of the 16S rRNA. Functionally, forms an intersubunit bridge (bridge B4) with the 23S rRNA of the 50S subunit in the ribosome. In Mycoplasma mycoides subsp. mycoides SC (strain CCUG 32753 / NCTC 10114 / PG1), this protein is Small ribosomal subunit protein uS15.